The chain runs to 237 residues: CD99 antigen-like protein 2 (237 aa).

Residues 1 to 25 (MVARLTAFLVCLVFSLATLVQRGYG) form the signal peptide. Topologically, residues 26-161 (DTDGFNLEDA…PGSGISTETG (136 aa)) are extracellular. Positions 47 to 157 (DHFSTTTRRP…SNDDPGSGIS (111 aa)) are disordered. Composition is skewed to low complexity over residues 51 to 66 (TTTRRPVTTRAPANPA) and 74 to 84 (TTTTRRPGTTR). Over residues 102-111 (DDRNDLDGPK) the composition is skewed to basic and acidic residues. The O-linked (Xyl...) (chondroitin sulfate) serine glycan is linked to Ser154. A helical transmembrane segment spans residues 162 to 182 (TIAGVASALAMALIGAVSSYI). The Cytoplasmic segment spans residues 183-237 (SYQQKKFCFSIQQGLNADYVKGENLEAVVCEEPQVTYSKQETQSAEPPPPEPPRI). Positions 218-227 (TYSKQETQSA) are enriched in polar residues. The segment at 218–237 (TYSKQETQSAEPPPPEPPRI) is disordered. Positions 228 to 237 (EPPPPEPPRI) are enriched in pro residues.

It belongs to the CD99 family. Post-translationally, O-glycosylated. In terms of tissue distribution, highly expressed in the nervous system, including brain, dentate nucleus of hippocampus, granular and Purkinje cells of cerebellum, brain stem nucleus and choroid plexus. Expressed in peripheral blood T- and B-cells and neutrophils (at protein level). Almost undetectable in bone marrow-derived neutrophils (at protein level). Also expressed in thymocytes (at protein level) with higher expression in cortical thymocytes than in medullary thymocytes. Expressed at high levels in testis (mostly in germ cells and Sertoli cells) and ovary (mostly in granulosa cells). Expressed in lung, heart, kidney and liver (at protein level); however, expression in heart, kidney and liver seems restricted to endothelial cells (at protein level). Highly expressed in endothelial cells and to a lower level in vascular smooth muscle cells (at protein level). Low expression in spleen.

The protein localises to the cell membrane. It is found in the cell junction. Its subcellular location is the secreted. Plays a role in a late step of leukocyte extravasation helping cells to overcome the endothelial basement membrane. Acts at the same site as, but independently of, PECAM1. Homophilic adhesion molecule, but these interactions may not be required for cell aggregation. In Mus musculus (Mouse), this protein is CD99 antigen-like protein 2 (Cd99l2).